A 1129-amino-acid polypeptide reads, in one-letter code: SMC5-SMC6 complex localization factor protein 2 (1129 aa).

Disordered stretches follow at residues 71-178 (VKAR…SILN), 312-343 (NTSSSSHYKESVTGRSSPHQHDLSSTSFTEQA), and 955-1057 (MLYD…QLEG). The span at 72-87 (KARRHTLPHSSHRRSP) shows a compositional bias: basic residues. Residues 93–110 (LLFQQRPRNSSGQFTHNP) are compositionally biased toward polar residues. 2 stretches are compositionally biased toward basic and acidic residues: residues 112–130 (QKKDRMDNRDHKTSIKKEL) and 149–166 (RKSEASTGSERETKRPRV). Composition is skewed to polar residues over residues 169–178 (QATSSSSILN) and 324–343 (TGRSSPHQHDLSSTSFTEQA). 2 stretches are compositionally biased toward acidic residues: residues 999–1014 (ESEEDDQSKDEEEEDW) and 1033–1048 (SAEDCVEDVSDAEEES).

This sequence belongs to the FAM178 family.

The protein resides in the nucleus. Functionally, plays a role in the DNA damage response (DDR) pathway by regulating postreplication repair of UV-damaged DNA and genomic stability maintenance. Promotes the recruitment of the SMC5-SMC6 complex to DNA lesions. This chain is SMC5-SMC6 complex localization factor protein 2 (slf2), found in Danio rerio (Zebrafish).